A 2096-amino-acid chain; its full sequence is HEAT repeat-containing protein 1 homolog (2096 aa).

Residues 2058–2096 (TVPFIAELLEDEHQRVEKNTRTGVQELETILGESVQKYL) form an HEAT repeat.

Belongs to the HEATR1/UTP10 family. Part of the small subunit (SSU) processome, composed of more than 70 proteins and the RNA chaperone small nucleolar RNA (snoRNA) U3. Interacts with MYC; the interaction is required for localization of MYC to the nucleolus.

It is found in the nucleus. The protein resides in the nucleolus. Its function is as follows. Ribosome biogenesis factor; required for recruitment of Myc to nucleoli. Involved in nucleolar processing of pre-18S ribosomal RNA. Required for optimal pre-ribosomal RNA transcription by RNA polymerase I. Part of the small subunit (SSU) processome, first precursor of the small eukaryotic ribosomal subunit. During the assembly of the SSU processome in the nucleolus, many ribosome biogenesis factors, an RNA chaperone and ribosomal proteins associate with the nascent pre-rRNA and work in concert to generate RNA folding, modifications, rearrangements and cleavage as well as targeted degradation of pre-ribosomal RNA by the RNA exosome. Involved in neuronal-lineage cell proliferation during larval development. The protein is HEAT repeat-containing protein 1 homolog of Drosophila melanogaster (Fruit fly).